Consider the following 218-residue polypeptide: NADH-ubiquinone oxidoreductase 21 kDa subunit, mitochondrial (218 aa).

The N-terminal 33 residues, 1–33, are a transit peptide targeting the mitochondrion; that stretch reads MSALRITTASAARMLRTSNAMMPSVMGAAQRRA. Residues 31–74 are disordered; the sequence is RRALSDSAEPARVPSVESARVPEKLAKEDSPLATPKRNSPDYNV. The segment covering 50-60 has biased composition (basic and acidic residues); sequence RVPEKLAKEDS.

The protein belongs to the complex I NDUFS4 subunit family. As to quaternary structure, complex I is composed of about 40 different subunits. This is a component of the iron-sulfur (IP) fragment of the enzyme.

It localises to the mitochondrion inner membrane. Functionally, accessory subunit of the mitochondrial membrane respiratory chain NADH dehydrogenase (Complex I), that is believed not to be involved in catalysis. Complex I functions in the transfer of electrons from NADH to the respiratory chain. The immediate electron acceptor for the enzyme is believed to be ubiquinone. This Neurospora crassa (strain ATCC 24698 / 74-OR23-1A / CBS 708.71 / DSM 1257 / FGSC 987) protein is NADH-ubiquinone oxidoreductase 21 kDa subunit, mitochondrial (nuo-21).